The following is a 113-amino-acid chain: UPF0122 protein PEPE_0845 (113 aa).

The protein belongs to the UPF0122 family.

In terms of biological role, might take part in the signal recognition particle (SRP) pathway. This is inferred from the conservation of its genetic proximity to ftsY/ffh. May be a regulatory protein. This is UPF0122 protein PEPE_0845 from Pediococcus pentosaceus (strain ATCC 25745 / CCUG 21536 / LMG 10740 / 183-1w).